The primary structure comprises 188 residues: Translocon-associated protein subunit beta (188 aa).

The signal sequence occupies residues 1 to 15; that stretch reads MKFSLFALLFVVVSC. Residues 16–151 are Lumenal-facing; it reads VDVGTQTRDA…EYDRRFAPKY (136 aa). Residues asparagine 93 and asparagine 109 are each glycosylated (N-linked (GlcNAc...) asparagine). Residues 152 to 172 traverse the membrane as a helical segment; that stretch reads TYFLVFFLIVAPTTLGSFLLF. The Cytoplasmic portion of the chain corresponds to 173 to 188; the sequence is QQSKARFPNVIKKKST.

It belongs to the TRAP-beta family. Heterotetramer of TRAP-alpha, TRAP-beta, TRAP-delta and TRAP-gamma.

The protein resides in the endoplasmic reticulum membrane. Functionally, TRAP proteins are part of a complex whose function is to bind calcium to the ER membrane and thereby regulate the retention of ER resident proteins. In Caenorhabditis elegans, this protein is Translocon-associated protein subunit beta.